Here is an 872-residue protein sequence, read N- to C-terminus: MTTATKDLSSHTPMMRQYLTIKAEFPHTLIFYRMGDFYELFFDDAKKASDLLDISLTARGKTGGNAIPMAGVPYHAAENYLAKLVALGESVAICEQIGDPATSKGPVERKVVRVITPGTVSDEALLVDRQDNLIVAIVDNQSPNAKLKTSSAPAFGLAYLDMASGRFVLTEPQTAEQLQAELQRLSPAELLYSESLQDFSLIEQRKGLRRRPEWEFDLDTAISLLNKQFDTKELTGFGVDDKPLGLAAAGCLFQYVKDTQRTALPHIRAIVCESANKGVVLDAATRRNLELTQNLHGGLDNTLAAILDKSSTPMGSRLLKRWLHFPLRDLTVLNNRQNTVSDIIALDLIAPIQPLLKGLGDIERIVSRIALGSARPRDFARLRHALQQLPELQNELKSGLTESPTNYLATIAQQSQPMPQLEGLLVHAIVENPPVLIRDGGVIAPGYNNELDVLRDLSDGATEFLAQLEQREKERTGIHSLKVGYNRVHGFFIEMSRTAAVDVPDDYIRRQTLKNNERFITEELKQHEEKVLSAQSKFLALEKSLYQELFDKVLPDLAQLQQLSQAIAELDVLTTFAERALALNYVKPSLVEEPGISIDAGRHVVVEQMTNDAFIANPVLLTEQRKMLIITGPNMGGKSTYMRQTALIVLLAHIGCYVPADNATIGLVDRIFTRIGASDDLASGRSTFMVEMTETANILHNATDKSLVLLDEIGRGTSTYDGLSLAWACAEMLALKTKAFTLFATHYFELTLLAGQISTLANVHLDAMEHDDNIVFMHAVQEGAASKSFGLQVAQLAGVPKTVIKRAKQRLSELEQQQTPSILPAPIQNDAFEQLSFAPEEHSVVTTLIDTDINELSPRQALDLLFSLKEQL.

632–639 (GPNMGGKS) lines the ATP pocket.

The protein belongs to the DNA mismatch repair MutS family.

In terms of biological role, this protein is involved in the repair of mismatches in DNA. It is possible that it carries out the mismatch recognition step. This protein has a weak ATPase activity. In Colwellia psychrerythraea (strain 34H / ATCC BAA-681) (Vibrio psychroerythus), this protein is DNA mismatch repair protein MutS.